We begin with the raw amino-acid sequence, 500 residues long: L-arabinose isomerase (500 aa).

Residues E306, E333, H349, and H448 each coordinate Mn(2+).

The protein belongs to the arabinose isomerase family. Mn(2+) serves as cofactor.

It catalyses the reaction beta-L-arabinopyranose = L-ribulose. It participates in carbohydrate degradation; L-arabinose degradation via L-ribulose; D-xylulose 5-phosphate from L-arabinose (bacterial route): step 1/3. Its function is as follows. Catalyzes the conversion of L-arabinose to L-ribulose. The polypeptide is L-arabinose isomerase (Cellvibrio japonicus (strain Ueda107) (Pseudomonas fluorescens subsp. cellulosa)).